Reading from the N-terminus, the 792-residue chain is Carboxysome assembly protein CsoS2 (792 aa).

Residues 1–15 are compositionally biased toward basic and acidic residues; it reads MAKQSSRELALERRK. The interval 1–235 is N-terminal domain; it reads MAKQSSRELA…EISQRVRELR (235 aa). 3 disordered regions span residues 1–259, 280–299, and 338–359; these read MAKQ…RNGS, QVVT…NEAS, and HGNR…DEPG. One copy of the N-repeat 1 repeat lies at 7 to 22; it reads RELALERRKALSNSGK. 2 stretches are compositionally biased toward polar residues: residues 17 to 36 and 69 to 82; these read LSNS…NRIR and DTSF…SGAS. An N-repeat 2 repeat occupies 94 to 109; the sequence is RELVLARRDELSRRGQ. Basic and acidic residues-rich tracts occupy residues 97 to 106 and 113 to 126; these read VLARRDELSR and KSKD…EKIS. A compositionally biased stretch (polar residues) spans 161-175; it reads DTVSRLSSRNSTSRP. 2 N-repeat repeats span residues 187–202 and 225–240; these read RALV…KHGK and REIS…KSGA. Residues 218 to 236 show a composition bias toward basic and acidic residues; that stretch reads GDPDLSSREISQRVRELRS. Residues 240-615 form a middle region region; the sequence is ATGKKRSGAC…VQACGSDAPA (376 aa). M-repeat repeat units lie at residues 270–319, 330–379, 388–427, 441–490, 500–549, and 560–609; these read KVGL…DTFC, KVAV…NQYC, KVGQ…GDQY, KVGS…NTFC, KVGL…SGWC, and RTPK…VQAC. Disordered regions lie at residues 608–662 and 687–792; these read ACGS…GSQI and HFKS…GARG. Residues 616–792 are C-terminal domain; it reads GSNDHQGSSE…LITVSGGARG (177 aa). 2 stretches are compositionally biased toward polar residues: residues 618–636 and 651–662; these read NDHQ…SVQS and VTGTSYEQGSQI. C-repeat repeat units lie at residues 633–678 and 703–738; these read SVQS…GTEQ and TRPE…EGAS. The C-terminal peptide (CTP) stretch occupies residues 763 to 792; the sequence is EVSQPMSRVTGSSGNTDQGSLITVSGGARG. Residues 764-785 are compositionally biased toward polar residues; the sequence is VSQPMSRVTGSSGNTDQGSLIT.

The protein belongs to the CsoS2 family. As to quaternary structure, probably interacts with the carboxysome major shell protein CsoS1 via the N-terminal domain; this complex probably also interacts with RuBisCO. Has been suggested to undergo ribosomal frameshifting, as does its ortholog in H.neapolitanus. The exact position of the putative frameshift is not given, but it would probably occur in the sixth M-repeat and remove the C-terminus.

The protein localises to the carboxysome. Required for alpha-carboxysome (Cb) assembly, mediates interaction between RuBisCO and the Cb shell. The protein is probably intrinsically disordered. The C-terminal repeats act as the encapsulation signal to target proteins to the Cb; they are necessary and sufficient to target both CsoS2 and foreign proteins to the Cb. The N-terminal repeats of this protein bind simultaneously to both subunits of RuBisCO. Probably also interacts with the major shell proteins (CsoS1); that interaction would increase the local concentration of CsoS2 so that it can condense RuBisCO and full carboxysomes can be formed. The sequence is that of Carboxysome assembly protein CsoS2 from Prochlorococcus marinus (strain MIT 9313).